The sequence spans 190 residues: GTP cyclohydrolase 1 (190 aa).

Cys-75, His-78, and Cys-146 together coordinate Zn(2+).

Belongs to the GTP cyclohydrolase I family. As to quaternary structure, toroid-shaped homodecamer, composed of two pentamers of five dimers.

The catalysed reaction is GTP + H2O = 7,8-dihydroneopterin 3'-triphosphate + formate + H(+). It participates in cofactor biosynthesis; 7,8-dihydroneopterin triphosphate biosynthesis; 7,8-dihydroneopterin triphosphate from GTP: step 1/1. In Campylobacter jejuni subsp. doylei (strain ATCC BAA-1458 / RM4099 / 269.97), this protein is GTP cyclohydrolase 1.